The primary structure comprises 151 residues: FAD synthase (151 aa).

ATP-binding positions include 21-22, 26-29, and Asp104; these read TF and HPGH.

The protein belongs to the archaeal FAD synthase family. In terms of assembly, homodimer. The cofactor is a divalent metal cation.

The enzyme catalyses FMN + ATP + H(+) = FAD + diphosphate. Its pathway is cofactor biosynthesis; FAD biosynthesis; FAD from FMN: step 1/1. In terms of biological role, catalyzes the transfer of the AMP portion of ATP to flavin mononucleotide (FMN) to produce flavin adenine dinucleotide (FAD) coenzyme. This chain is FAD synthase, found in Methanosarcina acetivorans (strain ATCC 35395 / DSM 2834 / JCM 12185 / C2A).